The following is a 37-amino-acid chain: Large ribosomal subunit protein bL36 (37 aa).

The protein belongs to the bacterial ribosomal protein bL36 family.

In Pasteurella multocida (strain Pm70), this protein is Large ribosomal subunit protein bL36.